A 622-amino-acid chain; its full sequence is Threonine--tRNA ligase (622 aa).

The interval 1–141 (MKTLLIHSDY…SRKITTERKE (141 aa)) is editing domain. The catalytic stretch occupies residues 199–498 (PHVKYIKEKE…TLENRPPALP (300 aa)). Residues cysteine 291, histidine 343, and histidine 467 each coordinate Zn(2+).

Belongs to the class-II aminoacyl-tRNA synthetase family. As to quaternary structure, homodimer. The cofactor is Zn(2+).

The protein localises to the cytoplasm. It carries out the reaction tRNA(Thr) + L-threonine + ATP = L-threonyl-tRNA(Thr) + AMP + diphosphate + H(+). Catalyzes the attachment of threonine to tRNA(Thr) in a two-step reaction: L-threonine is first activated by ATP to form Thr-AMP and then transferred to the acceptor end of tRNA(Thr). Also edits incorrectly charged L-seryl-tRNA(Thr). This Methanococcus maripaludis (strain C6 / ATCC BAA-1332) protein is Threonine--tRNA ligase.